Here is a 316-residue protein sequence, read N- to C-terminus: Polyprenyl transferase dpchC (316 aa).

Helical transmembrane passes span 24–44 (PLFTTFAGLWSTLLAGGAKMA), 60–80 (ALCFVASYLFCGAGMVWNDWI), 105–125 (EAMVWMVLQAALSWGVLEVML), 154–174 (MLGIYPQYILAFTIAWPAVIG), 192–212 (CLPLCTMVFFWTIYLNTAYSY), 234–254 (IHLLLVALVSPILVCLPIYLF), 258–278 (SLWLWLSWMGVWTASLAQQLV), and 296–316 (FILGIWTILACVVQVFLTGSA).

It belongs to the UbiA prenyltransferase family. Mg(2+) is required as a cofactor.

The protein resides in the membrane. It participates in secondary metabolite biosynthesis; terpenoid biosynthesis. Its function is as follows. Polyprenyl transferase; part of the gene cluster that mediates the biosynthesis of the diterpenoid pyrones higginsianins A and B. The first step of the pathway is the synthesis of the alpha-pyrone moiety by the polyketide synthase dpchA via condensation of one acetyl-CoA starter unit with 3 malonyl-CoA units and 2 methylations. The alpha-pyrone is then combined with geranylgeranyl pyrophosphate (GGPP) formed by the GGPP synthase dpchD through the action of the prenyltransferase dpchC to yield a linear alpha-pyrone diterpenoid. Subsequent steps in the diterpenoid pyrone biosynthetic pathway involve the decalin core formation, which is initiated by the epoxidation of the C10-C11 olefin by the FAD-dependent oxidoreductase dpchE, and is followed by a cyclization cascade catalyzed by the terpene cyclase dpchB. The short chain dehydrogenase/reductase dpchG then oxidizes the 8S hydroxy group to a ketone and the short chain dehydrogenase/reductase dpchH reduces the ketone to the 8R hydroxy group to yield higginsianin B. Finally, the FAD-dependent oxidoreductase dpchF converts higginsianin B into higginsianin A. The polypeptide is Polyprenyl transferase dpchC (Colletotrichum higginsianum (strain IMI 349063) (Crucifer anthracnose fungus)).